The primary structure comprises 298 residues: ATP synthase gamma chain (298 aa).

The protein belongs to the ATPase gamma chain family. In terms of assembly, F-type ATPases have 2 components, CF(1) - the catalytic core - and CF(0) - the membrane proton channel. CF(1) has five subunits: alpha(3), beta(3), gamma(1), delta(1), epsilon(1). CF(0) has three main subunits: a, b and c.

It localises to the cell membrane. Its function is as follows. Produces ATP from ADP in the presence of a proton gradient across the membrane. The gamma chain is believed to be important in regulating ATPase activity and the flow of protons through the CF(0) complex. This is ATP synthase gamma chain from Mycobacterium leprae (strain Br4923).